The following is a 98-amino-acid chain: NADH-ubiquinone oxidoreductase chain 4L (98 aa).

The next 3 membrane-spanning stretches (helical) occupy residues 1–21 (MSLV…GLLM), 29–49 (SLLC…IMIL), and 61–81 (IILL…LVMV).

It belongs to the complex I subunit 4L family. In terms of assembly, core subunit of respiratory chain NADH dehydrogenase (Complex I) which is composed of 45 different subunits.

Its subcellular location is the mitochondrion inner membrane. It catalyses the reaction a ubiquinone + NADH + 5 H(+)(in) = a ubiquinol + NAD(+) + 4 H(+)(out). Its function is as follows. Core subunit of the mitochondrial membrane respiratory chain NADH dehydrogenase (Complex I) which catalyzes electron transfer from NADH through the respiratory chain, using ubiquinone as an electron acceptor. Part of the enzyme membrane arm which is embedded in the lipid bilayer and involved in proton translocation. The polypeptide is NADH-ubiquinone oxidoreductase chain 4L (MT-ND4L) (Sorex unguiculatus (Long-clawed shrew)).